Reading from the N-terminus, the 765-residue chain is Proton-coupled zinc antiporter SLC30A5 (765 aa).

Methionine 1 bears the N-acetylmethionine mark. Topologically, residues 1 to 32 are cytoplasmic; it reads MEEKYGGDVLAGPGGGGGLGPVDVPSARLTKY. Residues 33–53 form a helical membrane-spanning segment; it reads IVLLCFTKFLKAVGLFESYDL. The Lumenal segment spans residues 54–56; it reads LKA. Residues 57-77 traverse the membrane as a helical segment; the sequence is VHIVQFIFILKLGTAFFMVLF. Residues 78–98 are Cytoplasmic-facing; that stretch reads QKPFSSGKTITKHQWIKIFKH. The helical transmembrane segment at 99–119 threads the bilayer; that stretch reads AVAGCIISLLWFFGLTLCGPL. A topological domain (lumenal) is located at residue arginine 120. A helical transmembrane segment spans residues 121 to 141; that stretch reads TLLLFEHSDIVVISLLSVLFT. The Cytoplasmic segment spans residues 142–152; the sequence is SSGGGPAKTRG. A helical membrane pass occupies residues 153 to 173; that stretch reads AAFFIIAVICLLLFDNDDLMA. The Lumenal portion of the chain corresponds to 174 to 193; the sequence is KMAEHPEGHHDSALTHMLYT. Residues 194–214 traverse the membrane as a helical segment; the sequence is AIAFLGVADHKGGVLLLVLAL. At 215 to 238 the chain is on the cytoplasmic side; that stretch reads CCKVGFHTASRKLSVDVGGAKRLQ. The chain crosses the membrane as a helical span at residues 239-259; the sequence is ALSHLVSVLLLCPWVIVLSVT. Over 260–267 the chain is Lumenal; it reads TESKVESW. The helical transmembrane segment at 268 to 288 threads the bilayer; sequence FSLIMPFATVIFFVMILDFYV. The Cytoplasmic portion of the chain corresponds to 289 to 303; that stretch reads DSICSVKMEVSKCAR. A helical membrane pass occupies residues 304–324; the sequence is YGSFPIFISALLFGNFWTHPI. At 325-342 the chain is on the lumenal side; that stretch reads TDQLRAMNKAAHQESTEH. Residues 343–363 traverse the membrane as a helical segment; it reads VLSGGVVVSAIFFILSANILS. The Cytoplasmic segment spans residues 364 to 418; that stretch reads SPSKRGQKGTLIGYSPEGTPLYNFMGDAFQHSSQSIPRFIKESLKQILEESDSRQ. Residues 419–439 form a helical membrane-spanning segment; sequence IFYFLCLNLLFTFVELFYGVL. Positions 420-640 are mediates homodimerization with SLC30A6; it reads FYFLCLNLLF…ILIFLSVVPL (221 aa). Topologically, residues 440–448 are lumenal; the sequence is TNSLGLISD. The helical transmembrane segment at 449-469 threads the bilayer; that stretch reads GFHMLFDCSALVMGLFAALMS. 2 residues coordinate Zn(2+): histidine 451 and aspartate 455. The Cytoplasmic segment spans residues 470-483; it reads RWKATRIFSYGYGR. A helical transmembrane segment spans residues 484–504; it reads IEILSGFINGLFLIVIAFFVF. Over 505-520 the chain is Lumenal; the sequence is MESVARLIDPPELDTH. Residues 521–541 traverse the membrane as a helical segment; it reads MLTPVSVGGLIVNLIGICAFS. The segment at 542 to 578 is his-rich loop; required for zinc transport; it reads HAHSHAHGASQGSCHSSDHSHSHHMHGHSDHGHGHSH. The Cytoplasmic portion of the chain corresponds to 542–592; that stretch reads HAHSHAHGASQGSCHSSDHSHSHHMHGHSDHGHGHSHGSAGGGMNANMRGV. The disordered stretch occupies residues 551–581; that stretch reads SQGSCHSSDHSHSHHMHGHSDHGHGHSHGSA. Residues 593–613 form a helical membrane-spanning segment; sequence FLHVLADTLGSIGVIVSTVLI. Residues histidine 595 and aspartate 599 each contribute to the Zn(2+) site. Over 614-617 the chain is Lumenal; the sequence is EQFG. A helical membrane pass occupies residues 618-638; that stretch reads WFIADPLCSLFIAILIFLSVV. Topologically, residues 639–765 are cytoplasmic; it reads PLIKDACQVL…KYCKDGTYIM (127 aa).

It belongs to the cation diffusion facilitator (CDF) transporter (TC 2.A.4) family. SLC30A subfamily. In terms of assembly, heterodimer with SLC30A6/ZNT6; form a functional zinc ion transmembrane transporter. Post-translationally, could homodimerize through the formation of dityrosine bonds upon oxidative stress. In terms of tissue distribution, ubiquitously expressed. Highly expressed in pancreas, liver and kidney. Expressed abundantly in insulin-containing beta cells, undetectable in other endocrine cell types including glucagon-secreting alpha cells and most acinar cells (at protein level).

It is found in the golgi apparatus. It localises to the golgi stack membrane. The protein resides in the cytoplasmic vesicle. Its subcellular location is the COPII-coated vesicle membrane. The protein localises to the secretory vesicle membrane. It is found in the trans-Golgi network membrane. It localises to the endoplasmic reticulum membrane. The protein resides in the cell membrane. Its subcellular location is the apical cell membrane. It catalyses the reaction Zn(2+)(in) + 2 H(+)(out) = Zn(2+)(out) + 2 H(+)(in). Together with SLC30A6 forms a functional proton-coupled zinc ion antiporter mediating zinc entry into the lumen of organelles along the secretory pathway. By contributing to zinc ion homeostasis within the early secretory pathway, regulates the activation and folding of enzymes like alkaline phosphatases and enzymes involved in phosphatidylinositol glycan anchor biosynthesis. Through the transport of zinc into secretory granules of pancreatic beta-cells, plays an important role in the storage and secretion of insulin. Functionally, zinc ion:proton antiporter mediating influx and efflux of zinc at the plasma membrane. The chain is Proton-coupled zinc antiporter SLC30A5 from Homo sapiens (Human).